Reading from the N-terminus, the 220-residue chain is Transcriptional regulatory protein LnrK (220 aa).

Positions 3–119 (KIIITDDQDI…TIVKAVMTVH (117 aa)) constitute a Response regulatory domain. Position 54 is a 4-aspartylphosphate (Asp-54). An HTH luxR-type domain is found at 151-216 (KPNELLDLTE…QAAIYSVRYG (66 aa)). The segment at residues 175–194 (NKEIAEKLYITEGTVKNHVS) is a DNA-binding region (H-T-H motif).

Post-translationally, phosphorylated by LnrJ.

It is found in the cytoplasm. In terms of biological role, required for resistance to linearmycins, a family of antibiotic-specialized metabolites produced by some streptomycetes. Member of the two-component regulatory system LnrJ/LnrK, which induces expression of the LnrLMN ABC transporter in response to linearmycins and other polyenes. Probably binds to the promoter region of the lnrLMN operon and directly regulates its expression. May also promote biofilm formation. This is Transcriptional regulatory protein LnrK from Bacillus subtilis (strain 168).